Here is a 312-residue protein sequence, read N- to C-terminus: MTSCVAEEPIKKIAIFGGTHGNELTGVFLVTHWLKNGAEVHRAGLEVKPFITNPRAVEKCTRYIDCDLNRVFDLENLSKEMSEDLPYEVRRAQEINHLFGPKNSDDAYDVVFDLHNTTSNMGCTLILEDSRNDFLIQMFHYIKTCMAPLPCSVYLIEHPSLKYATTRSIAKYPVGIEVGPQPHGVLRADILDQMRRMLKHALDFIQRFNEGKEFPPCAIDVYKIMEKVDYPRNESGDVAAVIHPNLQDQDWKPLHPGDPVFVSLDGKVIPLGGDCTVYPVFVNEAAYYEKKEAFAKTTKLTLNAKSIRSTLH.

2 residues coordinate Zn(2+): His20 and Glu23. N-acetyl-L-aspartate is bound by residues Arg62, Asn69, and Arg70. His115 contacts Zn(2+). Residues Tyr163 and Arg167 each contribute to the N-acetyl-L-aspartate site. Glu177 functions as the Proton donor/acceptor in the catalytic mechanism. Tyr287 lines the N-acetyl-L-aspartate pocket.

The protein belongs to the AspA/AstE family. Aspartoacylase subfamily. Homodimer. The cofactor is Zn(2+). In terms of tissue distribution, detected in kidney proximal tubule cells (at protein level).

It is found in the cytoplasm. The protein resides in the nucleus. It carries out the reaction an N-acyl-L-aspartate + H2O = a carboxylate + L-aspartate. The catalysed reaction is N-acetyl-L-aspartate + H2O = L-aspartate + acetate. Catalyzes the deacetylation of N-acetylaspartic acid (NAA) to produce acetate and L-aspartate. NAA occurs in high concentration in brain and its hydrolysis NAA plays a significant part in the maintenance of intact white matter. In other tissues it acts as a scavenger of NAA from body fluids. This Rattus norvegicus (Rat) protein is Aspartoacylase.